Here is a 405-residue protein sequence, read N- to C-terminus: Protochlorophyllide reductase A, chloroplastic (405 aa).

The transit peptide at 1–69 (MALQAASLVS…LRNNKAIIRA (69 aa)) directs the protein to the chloroplast.

The protein belongs to the short-chain dehydrogenases/reductases (SDR) family. POR subfamily. In terms of assembly, forms large complexes including TOC33, pPORA and OEP161 during pPORA import into plastids at the plastid envelope membrane. Interacts with CPP1 during plastid import. As to expression, expressed in young seedlings. Not detected in leaves.

It localises to the plastid. The protein resides in the chloroplast. It catalyses the reaction chlorophyllide a + NADP(+) = protochlorophyllide a + NADPH + H(+). Its pathway is porphyrin-containing compound metabolism; chlorophyll biosynthesis. Its function is as follows. Phototransformation of protochlorophyllide (Pchlide) to chlorophyllide (Chlide). PORA may also function as a photoprotectant during the transitory stage from dark to light. Functions in skotomorphogenesis, photomorphogenesis and throughout the plant life under specific light conditions. The sequence is that of Protochlorophyllide reductase A, chloroplastic (PORA) from Arabidopsis thaliana (Mouse-ear cress).